Consider the following 323-residue polypeptide: Melanocortin receptor 3 (323 aa).

Residues methionine 1–glutamine 37 are Extracellular-facing. N-linked (GlcNAc...) asparagine glycans are attached at residues asparagine 2, asparagine 16, and asparagine 28. A helical membrane pass occupies residues valine 38–valine 63. Residues valine 64 to phenylalanine 75 are Cytoplasmic-facing. The helical transmembrane segment at phenylalanine 76–isoleucine 100 threads the bilayer. At valine 101–asparagine 118 the chain is on the extracellular side. Residues isoleucine 119 to valine 140 form a helical membrane-spanning segment. Over aspartate 141–lysine 160 the chain is Cytoplasmic. The chain crosses the membrane as a helical span at residues alanine 161–valine 181. The Extracellular portion of the chain corresponds to tyrosine 182 to lysine 186. The helical transmembrane segment at methionine 187 to methionine 210 threads the bilayer. Residues phenylalanine 211–threonine 245 are Cytoplasmic-facing. A helical transmembrane segment spans residues isoleucine 246–cysteine 268. The Extracellular segment spans residues proline 269 to tyrosine 277. A helical transmembrane segment spans residues threonine 278 to phenylalanine 301. Over arginine 302–glycine 323 the chain is Cytoplasmic. A lipid anchor (S-palmitoyl cysteine) is attached at cysteine 315.

Belongs to the G-protein coupled receptor 1 family. In terms of tissue distribution, brain, placental, and gut tissues.

Its subcellular location is the cell membrane. Functionally, receptor for MSH (alpha, beta and gamma) and ACTH. This receptor is mediated by G proteins which activate adenylate cyclase. Required for expression of anticipatory patterns of activity and wakefulness during periods of limited nutrient availability and for the normal regulation of circadian clock activity in the brain. This is Melanocortin receptor 3 (MC3R) from Homo sapiens (Human).